The primary structure comprises 297 residues: HTH-type transcriptional regulator ArgP (297 aa).

One can recognise an HTH lysR-type domain in the interval 4-60; it reads PDYRTLQALDAVIRERGFERAAQKLCITQSAVSQRIKQLENLFGQPLLVRTIPPRPT. The segment at residues 21-40 is a DNA-binding region (H-T-H motif); the sequence is FERAAQKLCITQSAVSQRIK.

Belongs to the LysR transcriptional regulatory family. As to quaternary structure, homodimer.

Controls the transcription of genes involved in arginine and lysine metabolism. The sequence is that of HTH-type transcriptional regulator ArgP from Pectobacterium carotovorum subsp. carotovorum (strain PC1).